The sequence spans 67 residues: UPF0337 protein msl9551 (67 aa).

The protein belongs to the UPF0337 (CsbD) family.

This is UPF0337 protein msl9551 from Mesorhizobium japonicum (strain LMG 29417 / CECT 9101 / MAFF 303099) (Mesorhizobium loti (strain MAFF 303099)).